A 183-amino-acid polypeptide reads, in one-letter code: MTYDYVPLKEKYEKEVVPSMMKEFGYKNKLQVPRLEKIVINMGIGEGSRNADLIEIHARELMAIAGQKPVVTKAKKSIANFKIRKGMPLGLKVTLRGARMYNFLYKLINIVLPKLRDFRGVNPDSFDGKGNYALGLPEQLIFPEIAPDQVKRIQGMDVIIVTTAKTDEEARKLLALLGMPFKR.

This sequence belongs to the universal ribosomal protein uL5 family. In terms of assembly, part of the 50S ribosomal subunit; part of the 5S rRNA/L5/L18/L25 subcomplex. Contacts the 5S rRNA and the P site tRNA. Forms a bridge to the 30S subunit in the 70S ribosome.

Its function is as follows. This is one of the proteins that bind and probably mediate the attachment of the 5S RNA into the large ribosomal subunit, where it forms part of the central protuberance. In the 70S ribosome it contacts protein S13 of the 30S subunit (bridge B1b), connecting the 2 subunits; this bridge is implicated in subunit movement. Contacts the P site tRNA; the 5S rRNA and some of its associated proteins might help stabilize positioning of ribosome-bound tRNAs. The sequence is that of Large ribosomal subunit protein uL5 from Kosmotoga olearia (strain ATCC BAA-1733 / DSM 21960 / TBF 19.5.1).